The following is a 153-amino-acid chain: Nucleoside diphosphate kinase (153 aa).

ATP is bound by residues K11, F59, R87, T93, R104, and N114. The active-site Pros-phosphohistidine intermediate is the H117.

Belongs to the NDK family. Mg(2+) is required as a cofactor.

The catalysed reaction is a 2'-deoxyribonucleoside 5'-diphosphate + ATP = a 2'-deoxyribonucleoside 5'-triphosphate + ADP. It catalyses the reaction a ribonucleoside 5'-diphosphate + ATP = a ribonucleoside 5'-triphosphate + ADP. Major role in the synthesis of nucleoside triphosphates other than ATP. The ATP gamma phosphate is transferred to the NDP beta phosphate via a ping-pong mechanism, using a phosphorylated active-site intermediate. This chain is Nucleoside diphosphate kinase (swoH), found in Emericella nidulans (strain FGSC A4 / ATCC 38163 / CBS 112.46 / NRRL 194 / M139) (Aspergillus nidulans).